A 333-amino-acid chain; its full sequence is Gap junction alpha-4 protein (333 aa).

Topologically, residues 1–20 (MGDWGFLEKLLDQVQEHSTV) are cytoplasmic. The helical transmembrane segment at 21-40 (VGKIWLTVLFIFRILILGLA) threads the bilayer. Over 41–76 (GESVWGDEQSDFECNTAQPGCTNVCYDQAFPISHIR) the chain is Extracellular. Residues 77-99 (YWVLQFLFVSTPTLVYLGHVIYL) traverse the membrane as a helical segment. The Cytoplasmic portion of the chain corresponds to 100-148 (SRREERLRQKEGELRALPAKDPRVERALASIERQMAKISVAEDGHLRIR). The chain crosses the membrane as a helical span at residues 149 to 165 (GALMGTYVASVLCKSVL). Topologically, residues 166–207 (EAGFLYGQWRLYGWTMEPVFVCQRSPCPYLVDCFVSRPTEKT) are extracellular. Residues 208 to 230 (IFIIFMLVVGLISLVLNLLELAY) traverse the membrane as a helical segment. Residues 231–333 (LLCRCLSRGV…SSSASKKQYV (103 aa)) are Cytoplasmic-facing. The tract at residues 303–333 (SRAPLFLDPPPQTGRKSPSRPSSSASKKQYV) is disordered. Over residues 317 to 333 (RKSPSRPSSSASKKQYV) the composition is skewed to low complexity.

It belongs to the connexin family. Alpha-type (group II) subfamily. As to quaternary structure, a connexon is composed of a hexamer of connexins.

It localises to the cell membrane. It is found in the cell junction. Its subcellular location is the gap junction. Its function is as follows. One gap junction consists of a cluster of closely packed pairs of transmembrane channels, the connexons, through which materials of low MW diffuse from one cell to a neighboring cell. The chain is Gap junction alpha-4 protein (GJA4) from Bos taurus (Bovine).